A 950-amino-acid chain; its full sequence is Glycine dehydrogenase (decarboxylating) (950 aa).

An N6-(pyridoxal phosphate)lysine modification is found at K698.

This sequence belongs to the GcvP family. In terms of assembly, the glycine cleavage system is composed of four proteins: P, T, L and H. It depends on pyridoxal 5'-phosphate as a cofactor.

The enzyme catalyses N(6)-[(R)-lipoyl]-L-lysyl-[glycine-cleavage complex H protein] + glycine + H(+) = N(6)-[(R)-S(8)-aminomethyldihydrolipoyl]-L-lysyl-[glycine-cleavage complex H protein] + CO2. Functionally, the glycine cleavage system catalyzes the degradation of glycine. The P protein binds the alpha-amino group of glycine through its pyridoxal phosphate cofactor; CO(2) is released and the remaining methylamine moiety is then transferred to the lipoamide cofactor of the H protein. The protein is Glycine dehydrogenase (decarboxylating) of Neisseria meningitidis serogroup A / serotype 4A (strain DSM 15465 / Z2491).